Reading from the N-terminus, the 445-residue chain is Zinc finger protein 296 (445 aa).

Residues 1 to 10 (MSRRKAGRVP) show a composition bias toward basic residues. Residues 1 to 20 (MSRRKAGRVPRRVDPDTDTD) are disordered. Lysine 31 is covalently cross-linked (Glycyl lysine isopeptide (Lys-Gly) (interchain with G-Cter in SUMO2)). Residues 62 to 88 (SRPLGAPSTCAPRMPLSSKSSDRQPWT) are disordered. C2H2-type zinc fingers lie at residues 138-161 (LSCLQCGRQYTSPWKLLCHAQWDH), 212-234 (PTCDVCKKTLSSFSNLKVHMRSH), and 240-262 (YSCDQCSYACAQSSKLNRHKKTH). The segment at 256-359 (NRHKKTHRQL…TAPRKSHGPG (104 aa)) is disordered. Residues 269-278 (SPSTSASSRG) show a composition bias toward polar residues. Over residues 320–332 (PGSGAQGGPGFVG) the composition is skewed to gly residues. Over residues 338–351 (KVERTDPVKIEKTA) the composition is skewed to basic and acidic residues. 3 C2H2-type zinc fingers span residues 360–382 (GKCEFCGKSFTNSSNLTVHRRSH), 388–410 (YTCDQCPYACAQSSKLNRHRRTH), and 418–441 (VKCPHCLVPFGLQATLDKHLRQKH).

The protein belongs to the krueppel C2H2-type zinc-finger protein family. In terms of assembly, interacts with KLF4. Strongly expressed in testis and embryonic stem cells.

The protein resides in the nucleus. Functionally, may be a transcriptional corepressor with KLF4. This is Zinc finger protein 296 from Mus musculus (Mouse).